The sequence spans 269 residues: Putative imidazole glycerol phosphate synthase subunit hisF2 (269 aa).

Aspartate 133 is a catalytic residue.

Belongs to the HisA/HisF family. In terms of assembly, heterodimer of HisH and HisF.

The protein localises to the cytoplasm. The enzyme catalyses 5-[(5-phospho-1-deoxy-D-ribulos-1-ylimino)methylamino]-1-(5-phospho-beta-D-ribosyl)imidazole-4-carboxamide + L-glutamine = D-erythro-1-(imidazol-4-yl)glycerol 3-phosphate + 5-amino-1-(5-phospho-beta-D-ribosyl)imidazole-4-carboxamide + L-glutamate + H(+). Its pathway is amino-acid biosynthesis; L-histidine biosynthesis; L-histidine from 5-phospho-alpha-D-ribose 1-diphosphate: step 5/9. IGPS catalyzes the conversion of PRFAR and glutamine to IGP, AICAR and glutamate. The HisF subunit catalyzes the cyclization activity that produces IGP and AICAR from PRFAR using the ammonia provided by the HisH subunit. This chain is Putative imidazole glycerol phosphate synthase subunit hisF2 (hisF2), found in Parasynechococcus marenigrum (strain WH8102).